Here is a 456-residue protein sequence, read N- to C-terminus: tRNA (guanine(37)-N(1))-methyltransferase (456 aa).

S-adenosyl-L-methionine-binding positions include H246, 284–285 (DL), 310–311 (DG), and N336.

Belongs to the class I-like SAM-binding methyltransferase superfamily. TRM5/TYW2 family. In terms of assembly, monomer.

It is found in the mitochondrion matrix. The protein resides in the nucleus. It localises to the cytoplasm. It carries out the reaction guanosine(37) in tRNA + S-adenosyl-L-methionine = N(1)-methylguanosine(37) in tRNA + S-adenosyl-L-homocysteine + H(+). Specifically methylates the N1 position of guanosine-37 in various cytoplasmic and mitochondrial tRNAs. Methylation is not dependent on the nature of the nucleoside 5' of the target nucleoside. This is the first step in the biosynthesis of wybutosine (yW), a modified base adjacent to the anticodon of tRNAs and required for accurate decoding. This is tRNA (guanine(37)-N(1))-methyltransferase from Ciona intestinalis (Transparent sea squirt).